The following is a 378-amino-acid chain: Erythronate-4-phosphate dehydrogenase (378 aa).

Substrate-binding residues include Ser45 and Thr67. Residue Asp147 coordinates NAD(+). The active site involves Arg209. Asp233 contacts NAD(+). Residue Glu238 is part of the active site. The active-site Proton donor is the His255. NAD(+) is bound at residue Gly258. Tyr259 is a binding site for substrate.

Belongs to the D-isomer specific 2-hydroxyacid dehydrogenase family. PdxB subfamily. Homodimer.

Its subcellular location is the cytoplasm. It catalyses the reaction 4-phospho-D-erythronate + NAD(+) = (R)-3-hydroxy-2-oxo-4-phosphooxybutanoate + NADH + H(+). Its pathway is cofactor biosynthesis; pyridoxine 5'-phosphate biosynthesis; pyridoxine 5'-phosphate from D-erythrose 4-phosphate: step 2/5. Its function is as follows. Catalyzes the oxidation of erythronate-4-phosphate to 3-hydroxy-2-oxo-4-phosphonooxybutanoate. In Shewanella denitrificans (strain OS217 / ATCC BAA-1090 / DSM 15013), this protein is Erythronate-4-phosphate dehydrogenase.